We begin with the raw amino-acid sequence, 206 residues long: Octanoyltransferase (206 aa).

The region spanning 30–206 is the BPL/LPL catalytic domain; the sequence is PETNDEIWLV…EFVTLLNNSI (177 aa). Substrate-binding positions include 69 to 76, 137 to 139, and 150 to 152; these read RGGQVTYH, SLG, and GIA. Catalysis depends on Cys168, which acts as the Acyl-thioester intermediate.

It belongs to the LipB family.

It is found in the cytoplasm. The enzyme catalyses octanoyl-[ACP] + L-lysyl-[protein] = N(6)-octanoyl-L-lysyl-[protein] + holo-[ACP] + H(+). It participates in protein modification; protein lipoylation via endogenous pathway; protein N(6)-(lipoyl)lysine from octanoyl-[acyl-carrier-protein]: step 1/2. Its function is as follows. Catalyzes the transfer of endogenously produced octanoic acid from octanoyl-acyl-carrier-protein onto the lipoyl domains of lipoate-dependent enzymes. Lipoyl-ACP can also act as a substrate although octanoyl-ACP is likely to be the physiological substrate. This Francisella tularensis subsp. novicida (strain U112) protein is Octanoyltransferase.